The chain runs to 804 residues: Probable replication endonuclease from prophage-like region 1 (804 aa).

Residues Y498 and Y502 each act as O-(5'-phospho-DNA)-tyrosine intermediate in the active site.

It belongs to the phage GPA family.

Its function is as follows. Possible endonuclease which induces a single-strand cut and initiates DNA replication. This Salmonella typhi protein is Probable replication endonuclease from prophage-like region 1.